A 425-amino-acid chain; its full sequence is Riboflavin biosynthesis protein RibBA (425 aa).

The interval 1 to 204 (MTRLDSVERA…IADLIEWRRK (204 aa)) is DHBP synthase. Residues 28–29 (RE), aspartate 33, 141–145 (RPGHT), and glutamate 165 each bind D-ribulose 5-phosphate. Glutamate 29 is a binding site for Mg(2+). Histidine 144 is a binding site for Mg(2+). The interval 205–425 (HEKHIERVAE…HLPGEFGGAL (221 aa)) is GTP cyclohydrolase II. 259-263 (RVHSE) provides a ligand contact to GTP. 3 residues coordinate Zn(2+): cysteine 264, cysteine 275, and cysteine 277. Residues glutamine 280, 303 to 305 (EGR), and threonine 325 each bind GTP. Aspartate 337 functions as the Proton acceptor; for GTP cyclohydrolase activity in the catalytic mechanism. The active-site Nucleophile; for GTP cyclohydrolase activity is arginine 339. GTP is bound by residues threonine 360 and lysine 365.

In the N-terminal section; belongs to the DHBP synthase family. This sequence in the C-terminal section; belongs to the GTP cyclohydrolase II family. The cofactor is Mg(2+). It depends on Mn(2+) as a cofactor. Zn(2+) serves as cofactor.

The catalysed reaction is D-ribulose 5-phosphate = (2S)-2-hydroxy-3-oxobutyl phosphate + formate + H(+). It carries out the reaction GTP + 4 H2O = 2,5-diamino-6-hydroxy-4-(5-phosphoribosylamino)-pyrimidine + formate + 2 phosphate + 3 H(+). It functions in the pathway cofactor biosynthesis; riboflavin biosynthesis; 2-hydroxy-3-oxobutyl phosphate from D-ribulose 5-phosphate: step 1/1. It participates in cofactor biosynthesis; riboflavin biosynthesis; 5-amino-6-(D-ribitylamino)uracil from GTP: step 1/4. Its function is as follows. Catalyzes the conversion of D-ribulose 5-phosphate to formate and 3,4-dihydroxy-2-butanone 4-phosphate. Functionally, catalyzes the conversion of GTP to 2,5-diamino-6-ribosylamino-4(3H)-pyrimidinone 5'-phosphate (DARP), formate and pyrophosphate. This is Riboflavin biosynthesis protein RibBA from Mycobacterium bovis (strain ATCC BAA-935 / AF2122/97).